The chain runs to 282 residues: Acetyl-coenzyme A carboxylase carboxyl transferase subunit beta (282 aa).

The 258-residue stretch at 25–282 (LWTKCVSCGE…SSILTMLYRP (258 aa)) folds into the CoA carboxyltransferase N-terminal domain. Zn(2+) contacts are provided by Cys29, Cys32, Cys48, and Cys51. A C4-type zinc finger spans residues 29-51 (CVSCGETIYTKDIENNLNVCPKC).

Belongs to the AccD/PCCB family. Acetyl-CoA carboxylase is a heterohexamer composed of biotin carboxyl carrier protein (AccB), biotin carboxylase (AccC) and two subunits each of ACCase subunit alpha (AccA) and ACCase subunit beta (AccD). It depends on Zn(2+) as a cofactor.

The protein localises to the cytoplasm. It catalyses the reaction N(6)-carboxybiotinyl-L-lysyl-[protein] + acetyl-CoA = N(6)-biotinyl-L-lysyl-[protein] + malonyl-CoA. Its pathway is lipid metabolism; malonyl-CoA biosynthesis; malonyl-CoA from acetyl-CoA: step 1/1. Its function is as follows. Component of the acetyl coenzyme A carboxylase (ACC) complex. Biotin carboxylase (BC) catalyzes the carboxylation of biotin on its carrier protein (BCCP) and then the CO(2) group is transferred by the transcarboxylase to acetyl-CoA to form malonyl-CoA. This chain is Acetyl-coenzyme A carboxylase carboxyl transferase subunit beta, found in Citrifermentans bemidjiense (strain ATCC BAA-1014 / DSM 16622 / JCM 12645 / Bem) (Geobacter bemidjiensis).